The following is a 600-amino-acid chain: Elongation factor 4 (600 aa).

The tr-type G domain maps to 4–186 (SKIRNFSIIA…AIVNKIPAPY (183 aa)). GTP is bound by residues 16–21 (DHGKST) and 133–136 (NKVD).

Belongs to the TRAFAC class translation factor GTPase superfamily. Classic translation factor GTPase family. LepA subfamily.

It localises to the cell membrane. The catalysed reaction is GTP + H2O = GDP + phosphate + H(+). Functionally, required for accurate and efficient protein synthesis under certain stress conditions. May act as a fidelity factor of the translation reaction, by catalyzing a one-codon backward translocation of tRNAs on improperly translocated ribosomes. Back-translocation proceeds from a post-translocation (POST) complex to a pre-translocation (PRE) complex, thus giving elongation factor G a second chance to translocate the tRNAs correctly. Binds to ribosomes in a GTP-dependent manner. The sequence is that of Elongation factor 4 from Mesoplasma florum (strain ATCC 33453 / NBRC 100688 / NCTC 11704 / L1) (Acholeplasma florum).